Consider the following 373-residue polypeptide: Probable tRNA sulfurtransferase (373 aa).

Residues 54–158 (NKNIEELSKV…NDVAYFYHKI (105 aa)) enclose the THUMP domain. ATP contacts are provided by residues 176–177 (LF), 201–202 (NF), K256, G278, and Q287.

Belongs to the ThiI family.

Its subcellular location is the cytoplasm. The catalysed reaction is [ThiI sulfur-carrier protein]-S-sulfanyl-L-cysteine + a uridine in tRNA + 2 reduced [2Fe-2S]-[ferredoxin] + ATP + H(+) = [ThiI sulfur-carrier protein]-L-cysteine + a 4-thiouridine in tRNA + 2 oxidized [2Fe-2S]-[ferredoxin] + AMP + diphosphate. It catalyses the reaction [ThiS sulfur-carrier protein]-C-terminal Gly-Gly-AMP + S-sulfanyl-L-cysteinyl-[cysteine desulfurase] + AH2 = [ThiS sulfur-carrier protein]-C-terminal-Gly-aminoethanethioate + L-cysteinyl-[cysteine desulfurase] + A + AMP + 2 H(+). It participates in cofactor biosynthesis; thiamine diphosphate biosynthesis. In terms of biological role, catalyzes the ATP-dependent transfer of a sulfur to tRNA to produce 4-thiouridine in position 8 of tRNAs, which functions as a near-UV photosensor. Also catalyzes the transfer of sulfur to the sulfur carrier protein ThiS, forming ThiS-thiocarboxylate. This is a step in the synthesis of thiazole, in the thiamine biosynthesis pathway. The sulfur is donated as persulfide by IscS. The polypeptide is Probable tRNA sulfurtransferase (Saccharolobus islandicus (strain M.16.27) (Sulfolobus islandicus)).